We begin with the raw amino-acid sequence, 111 residues long: MTDIDPHIWGPSFWSTYHLYASSYPIHPTPIIMDAARSFVKTIPFTLPCSSCTDHAFAYIKNIQKQDPDLISIVSSKMLFEKFFIDFHNSVNYRLGKPLLPESVARKKWRF.

The ERV/ALR sulfhydryl oxidase domain occupies 2-109 (TDIDPHIWGP…LPESVARKKW (108 aa)). A disulfide bridge connects residues Cys49 and Cys52.

The protein belongs to the IIV-6 347L family. Requires FAD as cofactor.

It carries out the reaction 2 R'C(R)SH + O2 = R'C(R)S-S(R)CR' + H2O2. In terms of biological role, FAD-dependent sulfhydryl oxidase that catalyzes disulfide bond formation. The sequence is that of Putative FAD-linked sulfhydryl oxidase 347L from Invertebrate iridescent virus 6 (IIV-6).